Reading from the N-terminus, the 232-residue chain is 7-cyano-7-deazaguanine synthase (232 aa).

An ATP-binding site is contributed by leucine 8–leucine 18. Residues cysteine 188, cysteine 198, cysteine 201, and cysteine 204 each contribute to the Zn(2+) site.

It belongs to the QueC family. The cofactor is Zn(2+).

The catalysed reaction is 7-carboxy-7-deazaguanine + NH4(+) + ATP = 7-cyano-7-deazaguanine + ADP + phosphate + H2O + H(+). The protein operates within purine metabolism; 7-cyano-7-deazaguanine biosynthesis. Catalyzes the ATP-dependent conversion of 7-carboxy-7-deazaguanine (CDG) to 7-cyano-7-deazaguanine (preQ(0)). The polypeptide is 7-cyano-7-deazaguanine synthase (Nitrosospira multiformis (strain ATCC 25196 / NCIMB 11849 / C 71)).